The chain runs to 245 residues: NAD-dependent protein deacylase 1 (245 aa).

Positions 1-243 (MDEKLLKTIA…DELVRHVRKA (243 aa)) constitute a Deacetylase sirtuin-type domain. 20-39 (GAGVSAESGIPTFRGKDGLW) provides a ligand contact to NAD(+). Residues Tyr-64 and Arg-67 each coordinate substrate. Residue 98–101 (QNVD) participates in NAD(+) binding. The active-site Proton acceptor is His-116. Zn(2+) contacts are provided by Cys-124, Cys-127, Cys-145, and Cys-148. NAD(+)-binding positions include 185 to 187 (GTS), 211 to 213 (NPD), and Ala-229.

It belongs to the sirtuin family. Class III subfamily. It depends on Zn(2+) as a cofactor.

It localises to the cytoplasm. It carries out the reaction N(6)-acetyl-L-lysyl-[protein] + NAD(+) + H2O = 2''-O-acetyl-ADP-D-ribose + nicotinamide + L-lysyl-[protein]. The catalysed reaction is N(6)-succinyl-L-lysyl-[protein] + NAD(+) + H2O = 2''-O-succinyl-ADP-D-ribose + nicotinamide + L-lysyl-[protein]. In terms of biological role, NAD-dependent lysine deacetylase and desuccinylase that specifically removes acetyl and succinyl groups on target proteins. Modulates the activities of several proteins which are inactive in their acylated form. Deacetylates the N-terminal lysine residue of Alba, the major archaeal chromatin protein and that, in turn, increases Alba's DNA binding affinity, thereby repressing transcription. The protein is NAD-dependent protein deacylase 1 of Archaeoglobus fulgidus (strain ATCC 49558 / DSM 4304 / JCM 9628 / NBRC 100126 / VC-16).